Reading from the N-terminus, the 322-residue chain is Adenine deaminase (322 aa).

The Zn(2+) site is built by histidine 11, histidine 13, and histidine 189. Residue glutamate 192 is the Proton donor of the active site. Zn(2+) is bound at residue aspartate 270. Residue aspartate 271 coordinates substrate.

Belongs to the metallo-dependent hydrolases superfamily. Adenosine and AMP deaminases family. Adenine deaminase type 2 subfamily. Zn(2+) serves as cofactor.

The catalysed reaction is adenine + H2O + H(+) = hypoxanthine + NH4(+). Its function is as follows. Catalyzes the hydrolytic deamination of adenine to hypoxanthine. Plays an important role in the purine salvage pathway and in nitrogen catabolism. The polypeptide is Adenine deaminase (Rhizobium johnstonii (strain DSM 114642 / LMG 32736 / 3841) (Rhizobium leguminosarum bv. viciae)).